Here is a 483-residue protein sequence, read N- to C-terminus: MDAPLIASVILPEFGKGTVATDNIPIGKIIIRKRVDILSLDSANLTRTCSTCTEEKVKTQRCAACKIIHYCSKGCQKADWPFHKLECKALQASKQNGILPSVCRLLIRLYLLWQKNPAIIEPMEGHQNEFQAVSSSWSDAELIASAASHYTQIYQAELFQKLFCRLAVNAMNLVTSSFDSLGMCLDTILCRLNHSCDPNCQIIFDGAIVQLVSKRDIKKDEQLFISYIDIRLPKSIRQKQLLKKYFFSCYCPRCENDHTTKETDGSKWMGRLRNSKSLMKNLAMARDLWSCGWKQTAFPWSNLLHHIKLGMLDESNFNGAFAALYLKSSADEFLDALHVVDEYQLLLLGKQVAMEVKHLMFPNDKPLEMEFPSSSQPQQTVPTNNSLFLLKNIPSFGGLHHCILGRYSISLDDFVLWLLDRAQRLQQAVRISHPSTTFCSNVENDIKEIFEVCKDYCMLHVQNNLKAFEEKLWAACKDFLVTY.

An SET domain is found at 4–228 (PLIASVILPE…KDEQLFISYI (225 aa)). Zn(2+) contacts are provided by C49, C52, C62, C65, C71, C75, H83, and C87. The MYND-type zinc finger occupies 49–87 (CSTCTEEKVKTQRCAACKIIHYCSKGCQKADWPFHKLEC).

This sequence belongs to the class V-like SAM-binding methyltransferase superfamily.

The protein localises to the cytoplasm. Its subcellular location is the nucleus. This is SET domain and MYND-type zinc finger protein 6 (set6) from Schizosaccharomyces pombe (strain 972 / ATCC 24843) (Fission yeast).